Here is a 340-residue protein sequence, read N- to C-terminus: Glycerol-3-phosphate dehydrogenase [NAD(P)+] (340 aa).

NADPH is bound by residues Ser-15, Tyr-16, His-36, and Lys-110. Lys-110, Gly-139, and Thr-141 together coordinate sn-glycerol 3-phosphate. NADPH is bound at residue Ala-143. 5 residues coordinate sn-glycerol 3-phosphate: Lys-196, Asp-249, Ser-259, Arg-260, and Asn-261. Lys-196 (proton acceptor) is an active-site residue. Arg-260 provides a ligand contact to NADPH. NADPH is bound by residues Val-284 and Glu-286.

The protein belongs to the NAD-dependent glycerol-3-phosphate dehydrogenase family.

Its subcellular location is the cytoplasm. The enzyme catalyses sn-glycerol 3-phosphate + NAD(+) = dihydroxyacetone phosphate + NADH + H(+). It catalyses the reaction sn-glycerol 3-phosphate + NADP(+) = dihydroxyacetone phosphate + NADPH + H(+). The protein operates within membrane lipid metabolism; glycerophospholipid metabolism. In terms of biological role, catalyzes the reduction of the glycolytic intermediate dihydroxyacetone phosphate (DHAP) to sn-glycerol 3-phosphate (G3P), the key precursor for phospholipid synthesis. In Serratia marcescens, this protein is Glycerol-3-phosphate dehydrogenase [NAD(P)+].